The sequence spans 1284 residues: Putative late blight resistance protein homolog R1B-16 (1284 aa).

Residues 533–555 adopt a coiled-coil conformation; that stretch reads PRMNEEIVGFKDVIENLRNQLLN. The region spanning 534-821 is the NB-ARC domain; the sequence is RMNEEIVGFK…SESFIKSSEG (288 aa). ATP is bound at residue 567–574; that stretch reads GMPGLGKT. 8 LRR repeats span residues 942-966, 985-1010, 1013-1036, 1085-1107, 1108-1135, 1159-1181, 1182-1206, and 1219-1243; these read FKFL…LFYL, LWNL…VWDM, LRHL…SAKL, PIRL…FCIS, APNL…HLKN, FPQL…ADDA, FPNL…FMDI, and ESVV…NFKL. Positions 1217 to 1284 constitute an HMA domain; it reads CNESVVKSAM…VEKQRKRGML (68 aa).

It belongs to the disease resistance NB-LRR family.

It is found in the cytoplasm. The protein resides in the membrane. Its function is as follows. Confers resistance to late blight (Phytophthora infestans) races carrying the avirulence gene Avr1. Resistance proteins guard the plant against pathogens that contain an appropriate avirulence protein via an indirect interaction with this avirulence protein. That triggers a defense system including the hypersensitive response, which restricts the pathogen growth. The chain is Putative late blight resistance protein homolog R1B-16 (R1B-16) from Solanum demissum (Wild potato).